Consider the following 279-residue polypeptide: MSHYDQQYNAIIQKIIESGISDEEYQVRTKWDSDGTPAHTLSIMSEKMRFDNSEVPILTTKKVAWKTAIKELLWIWQLKSNDVQVLNDMGVHIWDQWRLEDGTIGAAYGYQLGKKNRTVNGQKVDQVDYLLHQLKHNPSSRRHLTMLWNPDDLDGMALTPCVYETQWYVKEGKLSLEVRARSNDMALGNPFNVFQYNVLQRMIAQVLGYELGEYIFNIGDCHIYTRHIDNLNIQMKREQYEAPKLWINPDIKNFYDFTIDDFKLIDYKHGDKLTFEVAV.

141–142 provides a ligand contact to dUMP; that stretch reads RR. C161 functions as the Nucleophile in the catalytic mechanism. DUMP contacts are provided by residues 181-184, N192, and 222-224; these read RSND and HIY. Position 184 (D184) interacts with (6R)-5,10-methylene-5,6,7,8-tetrahydrofolate. A278 contributes to the (6R)-5,10-methylene-5,6,7,8-tetrahydrofolate binding site.

It belongs to the thymidylate synthase family. Bacterial-type ThyA subfamily. As to quaternary structure, homodimer.

The protein localises to the cytoplasm. The catalysed reaction is dUMP + (6R)-5,10-methylene-5,6,7,8-tetrahydrofolate = 7,8-dihydrofolate + dTMP. It functions in the pathway pyrimidine metabolism; dTTP biosynthesis. Its function is as follows. Catalyzes the reductive methylation of 2'-deoxyuridine-5'-monophosphate (dUMP) to 2'-deoxythymidine-5'-monophosphate (dTMP) while utilizing 5,10-methylenetetrahydrofolate (mTHF) as the methyl donor and reductant in the reaction, yielding dihydrofolate (DHF) as a by-product. This enzymatic reaction provides an intracellular de novo source of dTMP, an essential precursor for DNA biosynthesis. The chain is Thymidylate synthase from Bacillus licheniformis (strain ATCC 14580 / DSM 13 / JCM 2505 / CCUG 7422 / NBRC 12200 / NCIMB 9375 / NCTC 10341 / NRRL NRS-1264 / Gibson 46).